Reading from the N-terminus, the 443-residue chain is EGF-containing fibulin-like extracellular matrix protein 2 (443 aa).

The signal sequence occupies residues 1 to 27 (MLPFASCLPGSLLLWAFLLLLLGAASP). Gln-28 carries the post-translational modification Pyrrolidone carboxylic acid. In terms of domain architecture, EGF-like 1; atypical spans 36 to 81 (YTECTDGYEWDADSQHCRDVNECLTIPEACKGEMKCINHYGGYLCL). Disulfide bonds link Cys-58–Cys-121, Cys-65–Cys-80, Cys-71–Cys-109, Cys-127–Cys-140, Cys-134–Cys-149, Cys-151–Cys-162, Cys-168–Cys-177, Cys-173–Cys-186, Cys-188–Cys-201, Cys-207–Cys-217, Cys-213–Cys-226, Cys-228–Cys-241, Cys-247–Cys-258, Cys-254–Cys-267, Cys-269–Cys-281, Cys-287–Cys-300, Cys-294–Cys-309, and Cys-315–Cys-327. The disordered stretch occupies residues 91-117 (LHGEGPPPPAAHAQQPNPCPQGYEPDE). In terms of domain architecture, EGF-like 2; calcium-binding spans 123–163 (DVDECTQALHDCRPSQDCHNLPGSYQCTCPDGYRKIGPECV). Residues 164 to 202 (DIDECRYRYCQHRCVNLPGSFRCQCEPGFQLGPNNRSCV) form the EGF-like 3; calcium-binding domain. Asn-198 is a glycosylation site (N-linked (GlcNAc...) asparagine). Residues 203–242 (DVNECDMGAPCEQRCFNSYGTFLCRCNQGYELHRDGFSCS) enclose the EGF-like 4; calcium-binding domain. The EGF-like 5; calcium-binding domain occupies 243-282 (DIDECGYSSYLCQYRCVNEPGRFSCHCPQGYQLLATRLCQ). The 46-residue stretch at 283 to 328 (DIDECETGAHQCSEAQTCVNFHGGYRCVDTNRCVEPYVQVSDNRCL) folds into the EGF-like 6; calcium-binding domain. N-linked (GlcNAc...) asparagine glycosylation occurs at Asn-394.

Belongs to the fibulin family. As to quaternary structure, homodimer; disulfide-linked. Multimer; allows heparin binding. Monomer. Binds preferentially to p53 mutants. Interacts with FBN1 (via N-terminal domain); this interaction inhibits EFEMP2 binding to LOX and ELN. Interacts with ELN with moderate affinity; this interaction regulates ELN self-assembly maturation stage. Interacts with PCOLCE. Interacts with collagen type IV trimer (COL4A1-COL4A1-COL4A2), NID2 and moderately with COL15A1-derived endostatin. Interacts with EMILIN1; this interaction promotes the incorporation of EFEMP2 into the extracellular matrix. Interacts with LTBP4; the LTBP4 long form (LTBP4L) has a stronger binding affinity than the LTBP4 short form and the LTBP4 long form promotes fibrillar deposition of EFEMP2. Interacts with LOX (via propeptide); this interaction is strong and facilitates formation of ternary complexes with ELN during elastic fiber assembly; this interaction limits interaction of EFEMP2 with FBLN5. Interacts with PITX2. Interacts with FBLN5 with moderate affinity. Interacts with LOXL1 (via propeptide), LTBP1 and TGFB1 stronger than with LOXL2 and LTBP3. N-glycosylated; contains mostly complex-type glycans. Not O-glycosylated. In terms of processing, cleaved by ELANE; produces a 50-55 kDa fragment. Cleaved by MMP2 and MMP9; produces several fragments. Expressed in elastic fibers of the skin, near the dermal-epidermal junction, surrounding the hair follicles and throughout the dermis. Expressed in tendon around tenocytes. Prominently expressed in cartilage, bone, perichondrium and ligaments. Also detected in bone marrow stroma. Expressed in aorta, lung, and esophagus.

It localises to the secreted. Its subcellular location is the extracellular space. It is found in the extracellular matrix. The protein resides in the basement membrane. Plays a crucial role in elastic fiber formation in tissue, and in the formation of ultrastructural connections between elastic laminae and smooth muscle cells in the aorta, therefore participates in terminal differentiation and maturation of smooth muscle cell (SMC) and in the mechanical properties and wall integrity maintenance of the aorta. In addition, is involved in the control of collagen fibril assembly in tissue throught proteolytic activation of LOX leading to cross- linking of collagen and elastin. Also promotes ELN coacervation and participates in the deposition of ELN coacervates on to microfibrils but also regulates ELN cross- linking through LOX interaction. Moreover adheres to the cells through heparin binding in a calcium-dependent manner and regulates vascularlar smooth muscle cells proliferation through angiotensin signaling. This Mus musculus (Mouse) protein is EGF-containing fibulin-like extracellular matrix protein 2.